A 151-amino-acid polypeptide reads, in one-letter code: Ubiquitin-conjugating enzyme E2 2 (151 aa).

The interval 1–26 (MSTSARRRLMRDFKRMQTDPPAGVSA) is disordered. The UBC core domain occupies 4-150 (SARRRLMRDF…VRETVEKSWE (147 aa)). Catalysis depends on Cys88, which acts as the Glycyl thioester intermediate.

It belongs to the ubiquitin-conjugating enzyme family.

The protein resides in the cytoplasm. The protein localises to the nucleus. The enzyme catalyses S-ubiquitinyl-[E1 ubiquitin-activating enzyme]-L-cysteine + [E2 ubiquitin-conjugating enzyme]-L-cysteine = [E1 ubiquitin-activating enzyme]-L-cysteine + S-ubiquitinyl-[E2 ubiquitin-conjugating enzyme]-L-cysteine.. Its pathway is protein modification; protein ubiquitination. Its function is as follows. Catalyzes the covalent attachment of ubiquitin to other proteins. Plays a role in transcription regulation by catalyzing the monoubiquitination of histone H2B to form H2BK123ub1. H2BK123ub1 gives a specific tag for epigenetic transcriptional activation and is also a prerequisite for H3K4me and H3K79me formation. Also involved in postreplication repair of UV-damaged DNA, in N-end rule-dependent protein degradation and in sporulation. In Emericella nidulans (strain FGSC A4 / ATCC 38163 / CBS 112.46 / NRRL 194 / M139) (Aspergillus nidulans), this protein is Ubiquitin-conjugating enzyme E2 2 (uvsJ).